A 583-amino-acid chain; its full sequence is Probable cysteine--tRNA ligase, mitochondrial (583 aa).

Cys82 is a Zn(2+) binding site. An L-cysteine-binding site is contributed by Gly83. Residues 84–94 (PTVYSSSHIGH) carry the 'HIGH' region motif. Residue Thr123 coordinates L-cysteine. The 'KIIK' region signature appears at 128-131 (KIIN). Positions 271, 296, and 300 each coordinate Zn(2+). His296 provides a ligand contact to L-cysteine. The 'KMSKS' region motif lies at 337-341 (KMSKS). Lys340 is an ATP binding site.

This sequence belongs to the class-I aminoacyl-tRNA synthetase family. It depends on Zn(2+) as a cofactor.

The protein resides in the mitochondrion. The catalysed reaction is tRNA(Cys) + L-cysteine + ATP = L-cysteinyl-tRNA(Cys) + AMP + diphosphate. Mitochondrial cysteine-specific aminoacyl-tRNA synthetase that catalyzes the ATP-dependent ligation of cysteine to tRNA(Cys). Its function is as follows. In addition to its role as an aminoacyl-tRNA synthetase, has also cysteine persulfide synthase activity. Produces reactive persulfide species such as cysteine persulfide (CysSSH) from substrate cysteine and mediate direct incorporation of CysSSH into proteins during translations, resulting in protein persulfides and polysulfides. CysSSHs behave as potent antioxidants and cellular protectants. The protein is Probable cysteine--tRNA ligase, mitochondrial (mcysS) of Dictyostelium discoideum (Social amoeba).